The sequence spans 91 residues: Heat shock protein 30E (91 aa).

The disordered stretch occupies residues 62–91 (RDQIRQPGAPESEGTSPNTGKDGKDPGNSL). Residues 82 to 91 (KDGKDPGNSL) are compositionally biased toward basic and acidic residues.

Belongs to the small heat shock protein (HSP20) family.

The polypeptide is Heat shock protein 30E (hsp30e) (Xenopus laevis (African clawed frog)).